Reading from the N-terminus, the 105-residue chain is Death-associated protein 1 homolog (105 aa).

Residues 75–105 are disordered; sequence AAQVAHQKPVPSAQKLPAGQHLNQHIHQPRK. Positions 95–105 are enriched in polar residues; it reads HLNQHIHQPRK.

This sequence belongs to the DAP-DAPL1 family. Associates with ribosomes; inhibiting translation. Interacts with eiF5a (eif5a and eif5a2); inhibiting translation.

Its function is as follows. Ribosome-binding protein involved in ribosome hibernation, a process during which ribosomes are stabilized in an inactive state and preserved from proteasomal degradation. Acts via its association with eiF5a (eif5a and eif5a2) at the polypeptide exit tunnel of the ribosome, preventing mRNA translation. Involved in ribosome hibernation in the mature egg by preventing mRNA translation, leading to ribosome inactivation. Ribosomes, which are produced in large quantities during oogenesis, are stored and translationally repressed in the egg and early embryo. Compared to dap1b, binds and inactivates ribosomes less efficiently. This is Death-associated protein 1 homolog from Danio rerio (Zebrafish).